We begin with the raw amino-acid sequence, 76 residues long: Exodeoxyribonuclease 7 small subunit (76 aa).

The protein belongs to the XseB family. In terms of assembly, heterooligomer composed of large and small subunits.

The protein localises to the cytoplasm. The catalysed reaction is Exonucleolytic cleavage in either 5'- to 3'- or 3'- to 5'-direction to yield nucleoside 5'-phosphates.. Its function is as follows. Bidirectionally degrades single-stranded DNA into large acid-insoluble oligonucleotides, which are then degraded further into small acid-soluble oligonucleotides. The chain is Exodeoxyribonuclease 7 small subunit from Staphylococcus haemolyticus (strain JCSC1435).